The following is a 125-amino-acid chain: Ribosome maturation factor RimP (125 aa).

The protein belongs to the RimP family.

It is found in the cytoplasm. Its function is as follows. Required for maturation of 30S ribosomal subunits. The chain is Ribosome maturation factor RimP from Rickettsia canadensis (strain McKiel).